Here is a 308-residue protein sequence, read N- to C-terminus: Apolipoprotein E (308 aa).

Residues 1 to 18 form the signal peptide; the sequence is MKFLWAALVVTLLAGCQA. 8 tandem repeats follow at residues 75–96, 97–118, 119–140, 141–162, 163–184, 185–206, 207–224, and 225–246. Residues 75–246 form an 8 X 22 AA approximate tandem repeats region; sequence LLIEETMKEV…RLDDVRDQME (172 aa). Residues 153 to 163 are LDL and other lipoprotein receptors binding; it reads HLRKLRKRLLR. A heparin-binding site is contributed by 157–160; the sequence is LRKR. Positions 205–281 are lipid-binding and lipoprotein association; that stretch reads AIPPSQQLRE…SWFEPLVQDM (77 aa). Residue 220–227 participates in heparin binding; it reads GQKVRGRL. The segment at 257–308 is homooligomerization; the sequence is SQVRLQAEAFQTRLKSWFEPLVQDMQRQWASLVEKVQSSLGISPSTKPSKTK. The tract at residues 269 to 281 is specificity for association with VLDL; the sequence is RLKSWFEPLVQDM.

This sequence belongs to the apolipoprotein A1/A4/E family. Homotetramer. May interact with ABCA1; functionally associated with ABCA1 in the biogenesis of HDLs. May interact with APP/A4 amyloid-beta peptide; the interaction is extremely stable in vitro but its physiological significance is unclear. May interact with MAPT. May interact with MAP2. In the cerebrospinal fluid, interacts with secreted SORL1. Interacts with PMEL; this allows the loading of PMEL luminal fragment on ILVs to induce fibril nucleation. APOE exists as multiple glycosylated and sialylated glycoforms within cells and in plasma. The extent of glycosylation and sialylation are tissue and context specific. Post-translationally, glycated in plasma VLDL. In terms of processing, phosphorylated by FAM20C in the extracellular medium.

The protein localises to the secreted. Its subcellular location is the extracellular space. The protein resides in the extracellular matrix. It localises to the extracellular vesicle. It is found in the endosome. The protein localises to the multivesicular body. In terms of biological role, APOE is an apolipoprotein, a protein associating with lipid particles, that mainly functions in lipoprotein-mediated lipid transport between organs via the plasma and interstitial fluids. APOE is a core component of plasma lipoproteins and is involved in their production, conversion and clearance. Apolipoproteins are amphipathic molecules that interact both with lipids of the lipoprotein particle core and the aqueous environment of the plasma. As such, APOE associates with chylomicrons, chylomicron remnants, very low density lipoproteins (VLDL) and intermediate density lipoproteins (IDL) but shows a preferential binding to high-density lipoproteins (HDL). It also binds a wide range of cellular receptors including the LDL receptor/LDLR and the very low-density lipoprotein receptor/VLDLR that mediate the cellular uptake of the APOE-containing lipoprotein particles. Finally, APOE also has a heparin-binding activity and binds heparan-sulfate proteoglycans on the surface of cells, a property that supports the capture and the receptor-mediated uptake of APOE-containing lipoproteins by cells. The protein is Apolipoprotein E (APOE) of Pteropus alecto (Black flying fox).